Here is an 80-residue protein sequence, read N- to C-terminus: Ribosome assembly protein 3 (80 aa).

Over residues 1–10 (MATNDQKIDN) the composition is skewed to basic and acidic residues. The tract at residues 1-35 (MATNDQKIDNKSTVSNMLENPMFQTFSKKETEKPS) is disordered. The span at 11 to 26 (KSTVSNMLENPMFQTF) shows a compositional bias: polar residues.

The protein belongs to the RSA3 family. In terms of assembly, associates with nucleolar pre-ribosomal particles.

It localises to the nucleus. Its subcellular location is the nucleolus. In terms of biological role, required for efficient biogenesis of the 60S ribosomal subunit. The sequence is that of Ribosome assembly protein 3 (rsa3) from Schizosaccharomyces pombe (strain 972 / ATCC 24843) (Fission yeast).